The chain runs to 116 residues: Large ribosomal subunit protein bL19c (116 aa).

Belongs to the bacterial ribosomal protein bL19 family.

It is found in the plastid. The protein localises to the chloroplast. The chain is Large ribosomal subunit protein bL19c from Cyanidium caldarium (Red alga).